Here is a 347-residue protein sequence, read N- to C-terminus: Glycerol-3-phosphate dehydrogenase [NAD(P)+] (347 aa).

3 residues coordinate NADPH: Trp20, Arg39, and Lys118. Positions 118, 152, and 154 each coordinate sn-glycerol 3-phosphate. Ala156 is a binding site for NADPH. Sn-glycerol 3-phosphate-binding residues include Lys207, Asp260, Ser270, Arg271, and Asn272. Lys207 functions as the Proton acceptor in the catalytic mechanism. Residue Arg271 participates in NADPH binding. Residues Val295 and Glu297 each coordinate NADPH.

It belongs to the NAD-dependent glycerol-3-phosphate dehydrogenase family.

The protein resides in the cytoplasm. The enzyme catalyses sn-glycerol 3-phosphate + NAD(+) = dihydroxyacetone phosphate + NADH + H(+). It carries out the reaction sn-glycerol 3-phosphate + NADP(+) = dihydroxyacetone phosphate + NADPH + H(+). Its pathway is membrane lipid metabolism; glycerophospholipid metabolism. Catalyzes the reduction of the glycolytic intermediate dihydroxyacetone phosphate (DHAP) to sn-glycerol 3-phosphate (G3P), the key precursor for phospholipid synthesis. The protein is Glycerol-3-phosphate dehydrogenase [NAD(P)+] of Cupriavidus pinatubonensis (strain JMP 134 / LMG 1197) (Cupriavidus necator (strain JMP 134)).